Here is a 221-residue protein sequence, read N- to C-terminus: MSDGDYDYLIKFLALGDSGVGKTSVLYQYTDGKFNSKFITTVGIDFREKRVVYRANGPDGTVGRGQRIHLQLWDTAGQERFRSLTTAFFRDAMGFLLLFDLTNEQSFLNVRNWISQLQMHAYCENPDIVLCGNKSDLEDQRAVKEEEARELAEKYGIPYFETSAANGTNISQAIEMLLDLIMKRMERCVDKSWIPEGVVRSNGHTSTDQLSEEKEKGLCGC.

Ser2 carries the post-translational modification N-acetylserine. A Phosphoserine modification is found at Ser2. Residue 16–24 (GDSGVGKTS) participates in GTP binding. The Effector region signature appears at 38-46 (FITTVGIDF). GTP is bound by residues 74–78 (DTAGQ), 133–136 (NKSD), and 163–165 (SAA). Residues Cys123 and Cys188 are joined by a disulfide bond. 2 S-geranylgeranyl cysteine lipidation sites follow: Cys219 and Cys221. A Cysteine methyl ester modification is found at Cys221.

It belongs to the small GTPase superfamily. Rab family. Binds SYTL1, SLAC2B, MYRIP, SYTL3, SYTL4 and SYTL5. Interacts with RPH3A and RPH3A. Binds MLPH and SYTL2. Interacts with UNC13D. Does not interact with the BLOC-3 complex (heterodimer of HPS1 and HPS4). Interacts (GDP-bound form preferentially) with DENND10. As to expression, high levels in eye, intestine, lung, pancreas and spleen, and low or absent in brain, liver, heart, kidney, and skeletal muscle.

Its subcellular location is the membrane. It is found in the melanosome. The protein resides in the late endosome. The protein localises to the lysosome. The catalysed reaction is GTP + H2O = GDP + phosphate + H(+). Regulated by guanine nucleotide exchange factors (GEFs) which promote the exchange of bound GDP for free GTP, GTPase activating proteins (GAPs) which increase the GTP hydrolysis activity, and GDP dissociation inhibitors which inhibit the dissociation of the nucleotide from the GTPase. Activated by GEFs such as DENND10. Small GTPase which cycles between active GTP-bound and inactive GDP-bound states. In its active state, binds to a variety of effector proteins to regulate homeostasis of late endocytic pathway, including endosomal positioning, maturation and secretion. Plays a role in cytotoxic granule exocytosis in lymphocytes. Required for both granule maturation and granule docking and priming at the immunologic synapse. This chain is Ras-related protein Rab-27A (Rab27a), found in Rattus norvegicus (Rat).